We begin with the raw amino-acid sequence, 100 residues long: Large ribosomal subunit protein uL23 (100 aa).

Belongs to the universal ribosomal protein uL23 family. As to quaternary structure, part of the 50S ribosomal subunit. Contacts protein L29, and trigger factor when it is bound to the ribosome.

Its function is as follows. One of the early assembly proteins it binds 23S rRNA. One of the proteins that surrounds the polypeptide exit tunnel on the outside of the ribosome. Forms the main docking site for trigger factor binding to the ribosome. The polypeptide is Large ribosomal subunit protein uL23 (Shewanella piezotolerans (strain WP3 / JCM 13877)).